Here is a 58-residue protein sequence, read N- to C-terminus: uncharacterized protein (58 aa).

Residues 12–32 (VALVYISVYFFSCISLIVYFF) traverse the membrane as a helical segment.

The protein resides in the membrane. This is an uncharacterized protein from Saccharomyces cerevisiae (strain ATCC 204508 / S288c) (Baker's yeast).